The sequence spans 227 residues: Orotidine 5'-phosphate decarboxylase (227 aa).

Substrate-binding positions include Asp-8, Lys-30, 59-68 (DLKLYDIPNT), Thr-118, Arg-178, Gln-187, Gly-207, and Arg-208. Catalysis depends on Lys-61, which acts as the Proton donor.

The protein belongs to the OMP decarboxylase family. Type 1 subfamily. As to quaternary structure, homodimer.

It carries out the reaction orotidine 5'-phosphate + H(+) = UMP + CO2. Its pathway is pyrimidine metabolism; UMP biosynthesis via de novo pathway; UMP from orotate: step 2/2. In terms of biological role, catalyzes the decarboxylation of orotidine 5'-monophosphate (OMP) to uridine 5'-monophosphate (UMP). The polypeptide is Orotidine 5'-phosphate decarboxylase (Sulfurimonas denitrificans (strain ATCC 33889 / DSM 1251) (Thiomicrospira denitrificans (strain ATCC 33889 / DSM 1251))).